The chain runs to 1100 residues: Exportin-T (1100 aa).

This sequence belongs to the exportin family. In terms of assembly, interacts with GSP1, GSP2, NSP1, NUP2 and UTP8.

The protein localises to the nucleus. It localises to the cytoplasm. Its function is as follows. tRNA nucleus export receptor which facilitates tRNA translocation across the nuclear pore complex. Preferentially interacts with tRNAs with mature 5'- and 3'-termini and does not distinguish between intron-containing and spliced tRNAs. In the nucleus binds to tRNA and to the Ran-GTPases GSP1 or GSP2 in their active GTP-bound form. Docking of this trimeric complex to the nuclear pore complex (NPC) is mediated through binding to nucleoporins. Upon transit of a nuclear export complex into the cytoplasm, disassembling of the complex and hydrolysis of Ran-GTP to Ran-GDP cause release of the tRNA from the export receptor. The directionality of nuclear export is thought to be conferred by an asymmetric distribution of the GTP- and GDP-bound forms of Ran between the cytoplasm and nucleus. Involved in pre-tRNA splicing, probably by affecting the interaction of pre-tRNA with splicing endonuclease. In Saccharomyces cerevisiae (strain YJM789) (Baker's yeast), this protein is Exportin-T (LOS1).